A 92-amino-acid chain; its full sequence is Small ribosomal subunit protein uS19 (92 aa).

This sequence belongs to the universal ribosomal protein uS19 family.

Its function is as follows. Protein S19 forms a complex with S13 that binds strongly to the 16S ribosomal RNA. The sequence is that of Small ribosomal subunit protein uS19 from Streptococcus thermophilus (strain ATCC BAA-491 / LMD-9).